The sequence spans 131 residues: Sec-independent protein translocase protein TatB (131 aa).

The helical transmembrane segment at 2-22 (FANIGWWEMLVLVMVGLVVLG) threads the bilayer. Residues 90 to 131 (DSLFTGDFDRPTPKKPDAAGSAGPDATEQIGAGPIPFDSDAT) are disordered. The segment covering 96–106 (DFDRPTPKKPD) has biased composition (basic and acidic residues).

This sequence belongs to the TatB family. As to quaternary structure, the Tat system comprises two distinct complexes: a TatABC complex, containing multiple copies of TatA, TatB and TatC subunits, and a separate TatA complex, containing only TatA subunits. Substrates initially bind to the TatABC complex, which probably triggers association of the separate TatA complex to form the active translocon.

Its subcellular location is the cell membrane. In terms of biological role, part of the twin-arginine translocation (Tat) system that transports large folded proteins containing a characteristic twin-arginine motif in their signal peptide across membranes. Together with TatC, TatB is part of a receptor directly interacting with Tat signal peptides. TatB may form an oligomeric binding site that transiently accommodates folded Tat precursor proteins before their translocation. The chain is Sec-independent protein translocase protein TatB from Mycobacterium tuberculosis (strain ATCC 25177 / H37Ra).